A 137-amino-acid chain; its full sequence is Nucleoside diphosphate kinase (137 aa).

6 residues coordinate ATP: Lys9, Phe57, Arg85, Thr91, Arg102, and Asn112. His115 (pros-phosphohistidine intermediate) is an active-site residue.

This sequence belongs to the NDK family. Homotetramer. The cofactor is Mg(2+).

The protein localises to the cytoplasm. The enzyme catalyses a 2'-deoxyribonucleoside 5'-diphosphate + ATP = a 2'-deoxyribonucleoside 5'-triphosphate + ADP. It carries out the reaction a ribonucleoside 5'-diphosphate + ATP = a ribonucleoside 5'-triphosphate + ADP. Functionally, major role in the synthesis of nucleoside triphosphates other than ATP. The ATP gamma phosphate is transferred to the NDP beta phosphate via a ping-pong mechanism, using a phosphorylated active-site intermediate. This is Nucleoside diphosphate kinase from Geobacter sp. (strain M21).